The sequence spans 209 residues: Uracil phosphoribosyltransferase (209 aa).

5-phospho-alpha-D-ribose 1-diphosphate-binding positions include Arg79, Arg104, and 131-139; that span reads DPMLATGGS. Residues Val194 and 199–201 each bind uracil; that span reads GDA. Residue Asp200 participates in 5-phospho-alpha-D-ribose 1-diphosphate binding.

This sequence belongs to the UPRTase family. It depends on Mg(2+) as a cofactor.

It catalyses the reaction UMP + diphosphate = 5-phospho-alpha-D-ribose 1-diphosphate + uracil. It functions in the pathway pyrimidine metabolism; UMP biosynthesis via salvage pathway; UMP from uracil: step 1/1. Allosterically activated by GTP. Its function is as follows. Catalyzes the conversion of uracil and 5-phospho-alpha-D-ribose 1-diphosphate (PRPP) to UMP and diphosphate. The sequence is that of Uracil phosphoribosyltransferase from Bacillus cytotoxicus (strain DSM 22905 / CIP 110041 / 391-98 / NVH 391-98).